The sequence spans 486 residues: Shutoff alkaline exonuclease (486 aa).

This sequence belongs to the herpesviridae alkaline nuclease family. As to quaternary structure, forms a complex with the DNA polymerase, the DNA polymerase processivity factor, and the major DNA binding protein.

Its subcellular location is the host nucleus. The protein localises to the host cytoplasm. Functionally, plays a role in processing non linear or branched viral DNA intermediates in order to promote the production of mature packaged unit-length linear progeny viral DNA molecules. Exhibits endonuclease and exonuclease activities and accepts both double-stranded and single-stranded DNA as substrate. Exonuclease digestion of DNA is in the 5'-&gt; 3' direction and the products are 5'-monophosphate nucleosides. Additionally, forms a recombinase with the major DNA-binding protein, which displays strand exchange activity. Also acts as a cytoplasmic RNA endonuclease that induces degradation of the majority of the cellular messenger RNAs during early lytic infection. The resulting inhibition of cellular protein synthesis serves to ensure maximal viral gene expression and evasion from host immune response. Internally cleaves host mRNAs which are then degraded by the cellular exonuclease XRN1. Bypasses therefore the regulatory steps of deadenylation and decapping normally required for XRN1 activation. In addition, inhibits host inflammasome activation to promote viral lytic replication by interacting with host AIM2 and disrupting its polymerization. The sequence is that of Shutoff alkaline exonuclease (ORF37) from Human herpesvirus 8 type P (isolate GK18) (HHV-8).